A 975-amino-acid chain; its full sequence is Probable outer membrane protein PmpA (975 aa).

Residues 1-51 (MNRVIEIHAHYDQRQLSQSPNTNFLVHHPYLTLIPKFLLGALIVYAPYSFA) form the signal peptide. The 277-residue stretch at 699 to 975 (RSLIPTSYFG…SLSCGGYVGF (277 aa)) folds into the Autotransporter domain.

Belongs to the PMP outer membrane protein family.

The protein localises to the secreted. Its subcellular location is the cell wall. The protein resides in the cell outer membrane. This chain is Probable outer membrane protein PmpA (pmpA), found in Chlamydia trachomatis serovar D (strain ATCC VR-885 / DSM 19411 / UW-3/Cx).